We begin with the raw amino-acid sequence, 87 residues long: Small ribosomal subunit protein eS21 (87 aa).

Belongs to the eukaryotic ribosomal protein eS21 family. Component of the small ribosomal subunit. Mature ribosomes consist of a small (40S) and a large (60S) subunit. The 40S subunit contains about 33 different proteins and 1 molecule of RNA (18S). The 60S subunit contains about 49 different proteins and 3 molecules of RNA (25S, 5.8S and 5S).

Its subcellular location is the cytoplasm. In terms of biological role, required for the processing of the 20S rRNA-precursor to mature 18S rRNA in a late step of the maturation of 40S ribosomal subunits. Has a physiological role leading to 18S rRNA stability. This chain is Small ribosomal subunit protein eS21 (RPS21), found in Eremothecium gossypii (strain ATCC 10895 / CBS 109.51 / FGSC 9923 / NRRL Y-1056) (Yeast).